Reading from the N-terminus, the 451-residue chain is Glycylpeptide N-tetradecanoyltransferase (451 aa).

Tetradecanoyl-CoA is bound by residues L177–I179 and N185–A189. The Proton acceptor; via carboxylate role is filled by L451.

Belongs to the NMT family. In terms of assembly, monomer.

The protein resides in the cytoplasm. It carries out the reaction N-terminal glycyl-[protein] + tetradecanoyl-CoA = N-tetradecanoylglycyl-[protein] + CoA + H(+). Competitively inhibited by SC-58272, a peptidomimetic derived from the N-terminal sequence of a natural substrate. In terms of biological role, adds a myristoyl group to the N-terminal glycine residue of certain cellular proteins. Substrate specificity requires an N-terminal glycine in the nascent polypeptide substrates. Ser is present at position 5 in almost all known N-myristoyl proteins and Lys is commonly encountered at postion 6. Basic residues are preferred at positions 7 and 8. The polypeptide is Glycylpeptide N-tetradecanoyltransferase (NMT1) (Candida albicans (strain SC5314 / ATCC MYA-2876) (Yeast)).